The sequence spans 403 residues: Queuine tRNA-ribosyltransferase catalytic subunit 1 (403 aa).

Position 2 is an N-acetylalanine (A2). The active-site Proton acceptor is the D105. Queuine is bound at residue 105 to 109; that stretch reads DSGGF. S139 bears the Phosphoserine mark. The queuine site is built by D159, Q202, and G229. Positions 260-266 are RNA binding; sequence GVGYATD. Residue D279 is the Nucleophile of the active site. Residues 284–288 form an RNA binding; important for wobble base 34 recognition region; it reads TRTAR. Positions 317, 319, 322, and 348 each coordinate Zn(2+).

The protein belongs to the queuine tRNA-ribosyltransferase family. Heterodimer of a catalytic subunit QTRT1 and an accessory subunit QTRT2. Zn(2+) serves as cofactor. In terms of tissue distribution, expressed in brain, heart, kidney, liver, ling, skeletal muscle, spleen and testis.

It is found in the cytoplasm. It localises to the mitochondrion outer membrane. The protein localises to the nucleus. It carries out the reaction guanosine(34) in tRNA + queuine = queuosine(34) in tRNA + guanine. Its function is as follows. Catalytic subunit of the queuine tRNA-ribosyltransferase (TGT) that catalyzes the base-exchange of a guanine (G) residue with queuine (Q) at position 34 (anticodon wobble position) in tRNAs with GU(N) anticodons (tRNA-Asp, -Asn, -His and -Tyr), resulting in the hypermodified nucleoside queuosine (7-(((4,5-cis-dihydroxy-2-cyclopenten-1-yl)amino)methyl)-7-deazaguanosine). Catalysis occurs through a double-displacement mechanism. The nucleophile active site attacks the C1' of nucleotide 34 to detach the guanine base from the RNA, forming a covalent enzyme-RNA intermediate. The proton acceptor active site deprotonates the incoming queuine, allowing a nucleophilic attack on the C1' of the ribose to form the product. Modification of cytoplasmic tRNAs with queuosine controls the elongation speed of cognate codons, thereby ensuring the correct folding of nascent proteins to maintain proteome integrity. The sequence is that of Queuine tRNA-ribosyltransferase catalytic subunit 1 from Mus musculus (Mouse).